The primary structure comprises 291 residues: Kidney mitochondrial carrier protein 1 (291 aa).

An N-acetylserine modification is found at Ser2. Solcar repeat units follow at residues 7–96 (KPFV…LKRL), 104–189 (ETLP…TKKH), and 198–289 (DTVY…LKKL). Helical transmembrane passes span 9 to 26 (FVYG…TFPI), 71 to 89 (GIAP…KIGT), 105 to 124 (TLPI…STIA), 164 to 183 (GVSL…LPVY), 204 to 224 (FLSS…VDVV), and 264 to 283 (GFWP…FVTY).

The protein belongs to the mitochondrial carrier (TC 2.A.29) family. In terms of assembly, interacts with VDAC1.

It localises to the mitochondrion inner membrane. It catalyses the reaction sulfite(in) + sulfate(out) = sulfite(out) + sulfate(in). The catalysed reaction is thiosulfate(in) + sulfate(out) = thiosulfate(out) + sulfate(in). The enzyme catalyses sulfate(out) + phosphate(in) = sulfate(in) + phosphate(out). It carries out the reaction oxalate(in) + sulfate(out) = oxalate(out) + sulfate(in). It catalyses the reaction malonate(in) + sulfate(out) = malonate(out) + sulfate(in). The catalysed reaction is maleate(in) + sulfate(out) = maleate(out) + sulfate(in). The enzyme catalyses (S)-malate(in) + sulfate(out) = (S)-malate(out) + sulfate(in). It carries out the reaction (3S)-citramalate(in) + sulfate(out) = (3S)-citramalate(out) + sulfate(in). It catalyses the reaction (3R)-citramalate(in) + sulfate(out) = (3R)-citramalate(out) + sulfate(in). The catalysed reaction is sulfate(out) + succinate(in) = sulfate(in) + succinate(out). The enzyme catalyses (S,S)-tartrate(in) + sulfate(out) = (S,S)-tartrate(out) + sulfate(in). It carries out the reaction (2R,3R)-tartrate(in) + sulfate(out) = (2R,3R)-tartrate(out) + sulfate(in). It catalyses the reaction D-aspartate(in) + sulfate(out) = D-aspartate(out) + sulfate(in). The catalysed reaction is L-aspartate(in) + sulfate(out) = L-aspartate(out) + sulfate(in). The enzyme catalyses sulfate(in) = sulfate(out). It carries out the reaction phosphate(in) = phosphate(out). It catalyses the reaction (S)-malate(out) = (S)-malate(in). Increased activity at pH 6.0. sulfate/sulfate exchange activity is inhibited strongly by pyridoxal 5'-phosphate, bathophenanthroline and the organic mercurials mersalyl, p-chloromercuribenzoate and HgCl2. Functionally, antiporter that transports inorganic anions (sulfate, sulfite, thiosulfate and phosphate) and, to a lesser extent, a variety of dicarboxylates (e.g. malonate, malate and citramalate) and, even more so, aspartate. The sulfate/sulfate exchange is much higher than the phosphate/phosphate and malate/malate exchanges. The transport affinities is higher for sulfate and thiosulfate than for any other substrate. May catalyze the export of sulfite and thiosulfate (the hydrogen sulfide degradation products) from the mitochondria, thereby modulating the level of the hydrogen sulfide. Also may mediate a very low unidirectional transport of sulfate, phosphate and (S)-malate. The polypeptide is Kidney mitochondrial carrier protein 1 (Homo sapiens (Human)).